The sequence spans 126 residues: Fatty acid-binding protein, liver (126 aa).

Ala-2 carries the post-translational modification N-acetylalanine. Positions 77, 99, and 101 each coordinate cholate.

Belongs to the calycin superfamily. Fatty-acid binding protein (FABP) family.

Its subcellular location is the cytoplasm. Its function is as follows. Binds free fatty acids and their coenzyme A derivatives, bilirubin, and some other small molecules in the cytoplasm. May be involved in intracellular lipid transport. This Aquarana catesbeiana (American bullfrog) protein is Fatty acid-binding protein, liver (fabp1).